The sequence spans 122 residues: Large ribosomal subunit protein uL14 (122 aa).

It belongs to the universal ribosomal protein uL14 family. In terms of assembly, part of the 50S ribosomal subunit. Forms a cluster with proteins L3 and L19. In the 70S ribosome, L14 and L19 interact and together make contacts with the 16S rRNA in bridges B5 and B8.

Binds to 23S rRNA. Forms part of two intersubunit bridges in the 70S ribosome. The polypeptide is Large ribosomal subunit protein uL14 (Acinetobacter baumannii (strain SDF)).